Here is a 270-residue protein sequence, read N- to C-terminus: Triosephosphate isomerase (270 aa).

Position 27 to 29 (27 to 29 (NWK)) interacts with substrate. Histidine 114 serves as the catalytic Electrophile. Glutamate 184 acts as the Proton acceptor in catalysis. Residues glycine 190, serine 230, and 251–252 (GG) each bind substrate.

The protein belongs to the triosephosphate isomerase family. As to quaternary structure, homodimer.

Its subcellular location is the cytoplasm. It carries out the reaction D-glyceraldehyde 3-phosphate = dihydroxyacetone phosphate. It functions in the pathway carbohydrate biosynthesis; gluconeogenesis. It participates in carbohydrate degradation; glycolysis; D-glyceraldehyde 3-phosphate from glycerone phosphate: step 1/1. Functionally, involved in the gluconeogenesis. Catalyzes stereospecifically the conversion of dihydroxyacetone phosphate (DHAP) to D-glyceraldehyde-3-phosphate (G3P). This chain is Triosephosphate isomerase, found in Chlamydia muridarum (strain MoPn / Nigg).